Here is a 358-residue protein sequence, read N- to C-terminus: Peptide chain release factor 1 (358 aa).

The residue at position 233 (Gln233) is an N5-methylglutamine. The tract at residues Ala286–Asn309 is disordered.

This sequence belongs to the prokaryotic/mitochondrial release factor family. Post-translationally, methylated by PrmC. Methylation increases the termination efficiency of RF1.

The protein resides in the cytoplasm. Peptide chain release factor 1 directs the termination of translation in response to the peptide chain termination codons UAG and UAA. The protein is Peptide chain release factor 1 of Carboxydothermus hydrogenoformans (strain ATCC BAA-161 / DSM 6008 / Z-2901).